Here is a 336-residue protein sequence, read N- to C-terminus: HTH-type transcriptional repressor PurR (336 aa).

In terms of domain architecture, HTH lacI-type spans 2–56 (ATIKDVARLAGVSTTTVSHVINKTRFVAETTQEKVMEAVKQLNYAPSAVARSLKC). The H-T-H motif DNA-binding region spans 4 to 23 (IKDVARLAGVSTTTVSHVIN). The DNA-binding element occupies 48–56 (SAVARSLKC). Hypoxanthine is bound by residues phenylalanine 73, lysine 189, phenylalanine 220, and aspartate 274.

As to quaternary structure, homodimer.

The protein operates within purine metabolism; purine nucleotide biosynthesis [regulation]. In terms of biological role, is the main repressor of the genes involved in the de novo synthesis of purine nucleotides, regulating purB, purC, purEK, purF, purHD, purL, purMN and guaBA expression. PurR is allosterically activated to bind its cognate DNA by binding the purine corepressors, hypoxanthine or guanine, thereby effecting transcription repression. This is HTH-type transcriptional repressor PurR from Vibrio cholerae serotype O1 (strain ATCC 39315 / El Tor Inaba N16961).